We begin with the raw amino-acid sequence, 148 residues long: Putative nickel-responsive regulator (148 aa).

The Ni(2+) site is built by His-88, His-99, His-101, and Cys-107.

It belongs to the transcriptional regulatory CopG/NikR family. Requires Ni(2+) as cofactor.

Its function is as follows. Transcriptional regulator. The chain is Putative nickel-responsive regulator from Helicobacter pylori (strain Shi470).